Reading from the N-terminus, the 147-residue chain is Putative pre-16S rRNA nuclease (147 aa).

This sequence belongs to the YqgF nuclease family.

It localises to the cytoplasm. In terms of biological role, could be a nuclease involved in processing of the 5'-end of pre-16S rRNA. This Acinetobacter baylyi (strain ATCC 33305 / BD413 / ADP1) protein is Putative pre-16S rRNA nuclease.